Consider the following 1478-residue polypeptide: Adhesion G protein-coupled receptor L2 (1478 aa).

Positions 1–25 (MVSSGCRMRSLWFIIIISFLPNTEG) are cleaved as a signal peptide. At 26–855 (FSRAALPFGL…VHELLLTVIT (830 aa)) the chain is on the extracellular side. Residues 41-130 (SCEGYSIDLR…KYLEVQYECV (90 aa)) form the SUEL-type lectin domain. Asn-99 carries N-linked (GlcNAc...) asparagine glycosylation. An Olfactomedin-like domain is found at 139–398 (VCPGTLKAIV…ILRYSLEFGP (260 aa)). An intrachain disulfide couples Cys-140 to Cys-322. A glycan (N-linked (GlcNAc...) asparagine) is linked at Asn-335. A disordered region spans residues 422–458 (VSTTSTTSQKGPMSTTVAGSQEGSKGTKAPPAVSTTK). The segment covering 430–445 (QKGPMSTTVAGSQEGS) has biased composition (polar residues). Asn-524, Asn-633, Asn-735, Asn-748, Asn-791, Asn-796, and Asn-817 each carry an N-linked (GlcNAc...) asparagine glycan. A GAIN-B domain is found at 663–841 (TRVSMPTENI…AILMAHREIA (179 aa)). 2 disulfide bridges follow: Cys-792-Cys-823 and Cys-811-Cys-825. Positions 792–841 (CSFWNYSERTMMGYWSTQGCKLVDTNKTRTTCACSHLTNFAILMAHREIA) are GPS. The helical transmembrane segment at 856–876 (WVGIVISLVCLAICIFTFCFF) threads the bilayer. The Cytoplasmic portion of the chain corresponds to 877–884 (RGLQSDRN). The helical transmembrane segment at 885–905 (TIHKNLCINLFIAEFIFLIGI) threads the bilayer. Topologically, residues 906–911 (DKTKYM) are extracellular. Residues 912-932 (IACPIFAGLLHFFFLAAFAWM) traverse the membrane as a helical segment. At 933-955 (CLEGVQLYLMLVEVFESEYSRKK) the chain is on the cytoplasmic side. A helical transmembrane segment spans residues 956 to 976 (YYYVAGYLFPATVVGVSAAID). Topologically, residues 977–994 (YKSYGTEKACWLHVDNYF) are extracellular. A helical membrane pass occupies residues 995 to 1015 (IWSFIGPVTFIILLNIIFLVI). At 1016 to 1056 (TLCKMVKHSNTLKPDSSRLENINNYRVCDGYYNTDLPGSWV) the chain is on the cytoplasmic side. The helical transmembrane segment at 1057-1077 (LGAFALLCLLGLTWSFGLLFI) threads the bilayer. Over 1078 to 1081 (NEET) the chain is Extracellular. A helical transmembrane segment spans residues 1082-1102 (IVMAYLFTIFNAFQGVFIFIF). At 1103–1478 (HCALQKKVRK…EGQMQLVTSL (376 aa)) the chain is on the cytoplasmic side. The tract at residues 1378 to 1419 (AEDHLQSPNRDSLYTSMPNLRDSPYQESSPDMEEDLSPSRRS) is disordered. The span at 1383–1395 (QSPNRDSLYTSMP) shows a compositional bias: polar residues. Phosphoserine occurs at positions 1393, 1428, and 1449.

Belongs to the G-protein coupled receptor 2 family. Adhesion G-protein coupled receptor (ADGR) subfamily. Heterodimer of 2 chains generated by proteolytic processing; the large extracellular N-terminal fragment and the membrane-bound C-terminal fragment predominantly remain associated and non-covalently linked. Autoproteolytically processed at the GPS region of the GAIN-B domain; this cleavage modulates receptor activity. Ubiquitously expressed.

Its subcellular location is the postsynaptic cell membrane. Its activity is regulated as follows. Forms a heterodimer of 2 chains generated by proteolytic processing that remain associated through non-covalent interactions mediated by the GAIN-B domain. In the inactivated receptor, the Stachel sequence (also named stalk) is embedded in the GAIN-B domain, where it adopts a beta-strand conformation. On activation, the Stachel moves into the 7 transmembrane region and adopts a twisted hook-shaped configuration that forms contacts within the receptor, leading to coupling of a G-alpha protein, which activates signaling. The cleaved GAIN-B and N-terminal domains can then dissociate from the rest of the receptor. In terms of biological role, orphan adhesion G-protein coupled receptor (aGPCR), which mediates synapse specificity. Ligand binding causes a conformation change that triggers signaling via guanine nucleotide-binding proteins (G proteins) and modulates the activity of downstream effectors. Following G-protein coupled receptor activation, associates with cell adhesion molecules that are expressed at the surface of adjacent cells to direct synapse specificity. Specifically mediates the establishment of perforant-path synapses on CA1-region pyramidal neurons in the hippocampus. Localizes to postsynaptic spines in excitatory synapses in the S.lacunosum-moleculare and interacts with presynaptic cell adhesion molecules, such as teneurins, promoting synapse formation. The protein is Adhesion G protein-coupled receptor L2 (ADGRL2) of Bos taurus (Bovine).